Here is a 472-residue protein sequence, read N- to C-terminus: PEP-dependent dihydroxyacetone kinase, phosphoryl donor subunit DhaM (472 aa).

In terms of domain architecture, PTS EIIA type-4 spans 1 to 135 (MVNLVIVSHS…NALEAKRVQL (135 aa)). His-9 serves as the catalytic Tele-phosphohistidine intermediate. The HPr domain maps to 156–243 (ARSVSVVIQN…ALAAENFGEP (88 aa)). The Pros-phosphohistidine intermediate role is filled by His-170. Residues 266–472 (PQPQDRISRE…DIPGKRVIRG (207 aa)) form a PTS EI-like, N-terminal part region. His-432 serves as the catalytic Tele-phosphohistidine intermediate.

The protein belongs to the PEP-utilizing enzyme family. In terms of assembly, homodimer. The dihydroxyacetone kinase complex is composed of a homodimer of DhaM, a homodimer of DhaK and the subunit DhaL.

The catalysed reaction is dihydroxyacetone + phosphoenolpyruvate = dihydroxyacetone phosphate + pyruvate. Functionally, component of the dihydroxyacetone kinase complex, which is responsible for the phosphoenolpyruvate (PEP)-dependent phosphorylation of dihydroxyacetone. DhaM serves as the phosphoryl donor. Is phosphorylated by phosphoenolpyruvate in an EI- and HPr-dependent reaction, and a phosphorelay system on histidine residues finally leads to phosphoryl transfer to DhaL and dihydroxyacetone. The chain is PEP-dependent dihydroxyacetone kinase, phosphoryl donor subunit DhaM from Klebsiella michiganensis (strain ATCC 8724 / DSM 4798 / JCM 20051 / NBRC 3318 / NRRL B-199 / KCTC 1686 / BUCSAV 143 / CCM 1901).